Here is an 866-residue protein sequence, read N- to C-terminus: DNA mismatch repair protein MutS (866 aa).

Gly-613–Ser-620 is an ATP binding site.

The protein belongs to the DNA mismatch repair MutS family.

This protein is involved in the repair of mismatches in DNA. It is possible that it carries out the mismatch recognition step. This protein has a weak ATPase activity. In Haemophilus ducreyi (strain 35000HP / ATCC 700724), this protein is DNA mismatch repair protein MutS.